We begin with the raw amino-acid sequence, 288 residues long: UPF0761 membrane protein HSM_1104 (288 aa).

A run of 6 helical transmembrane segments spans residues 36 to 56, 92 to 112, 127 to 147, 176 to 196, 200 to 220, and 240 to 260; these read TLAL…FPVF, QMSA…IHSI, PAIF…IVIA, LLSL…YMVV, KVSI…FTLG, and AMAT…AVLL.

This sequence belongs to the UPF0761 family.

The protein resides in the cell inner membrane. This Histophilus somni (strain 2336) (Haemophilus somnus) protein is UPF0761 membrane protein HSM_1104.